Here is a 492-residue protein sequence, read N- to C-terminus: Stage IV sporulation protein A (492 aa).

Positions 24 to 31 match the Walker A motif; involved in ATP-binding motif; it reads GAVRTGKS. 24–31 contacts ATP; sequence GAVRTGKS.

Its subcellular location is the cytoplasm. The enzyme catalyses ATP + H2O = ADP + phosphate + H(+). In terms of biological role, ATPase. Has a role at an early stage in the morphogenesis of the spore coat outer layers. Directs the assembly of the coat and exosporium to an area around the forespore. The protein is Stage IV sporulation protein A of Bacillus anthracis.